The chain runs to 226 residues: ATP synthase F(0) complex subunit a (226 aa).

7 helical membrane passes run 11 to 31, 37 to 54, 72 to 92, 98 to 118, 138 to 158, 178 to 198, and 199 to 219; these read SPEL…VLLI, LLGN…MTIM, LTSL…PYTF, LSMN…TGMT, IPFM…ALGV, TLNF…LLFL, and LCIL…LLII.

Belongs to the ATPase A chain family. In terms of assembly, component of the ATP synthase complex composed at least of ATP5F1A/subunit alpha, ATP5F1B/subunit beta, ATP5MC1/subunit c (homooctomer), MT-ATP6/subunit a, MT-ATP8/subunit 8, ATP5ME/subunit e, ATP5MF/subunit f, ATP5MG/subunit g, ATP5MK/subunit k, ATP5MJ/subunit j, ATP5F1C/subunit gamma, ATP5F1D/subunit delta, ATP5F1E/subunit epsilon, ATP5PF/subunit F6, ATP5PB/subunit b, ATP5PD/subunit d, ATP5PO/subunit OSCP. ATP synthase complex consists of a soluble F(1) head domain (subunits alpha(3) and beta(3)) - the catalytic core - and a membrane F(0) domain - the membrane proton channel (subunits c, a, 8, e, f, g, k and j). These two domains are linked by a central stalk (subunits gamma, delta, and epsilon) rotating inside the F1 region and a stationary peripheral stalk (subunits F6, b, d, and OSCP). Interacts with DNAJC30; interaction is direct.

It localises to the mitochondrion inner membrane. The enzyme catalyses H(+)(in) = H(+)(out). Subunit a, of the mitochondrial membrane ATP synthase complex (F(1)F(0) ATP synthase or Complex V) that produces ATP from ADP in the presence of a proton gradient across the membrane which is generated by electron transport complexes of the respiratory chain. ATP synthase complex consist of a soluble F(1) head domain - the catalytic core - and a membrane F(1) domain - the membrane proton channel. These two domains are linked by a central stalk rotating inside the F(1) region and a stationary peripheral stalk. During catalysis, ATP synthesis in the catalytic domain of F(1) is coupled via a rotary mechanism of the central stalk subunits to proton translocation. With the subunit c (ATP5MC1), forms the proton-conducting channel in the F(0) domain, that contains two crucial half-channels (inlet and outlet) that facilitate proton movement from the mitochondrial intermembrane space (IMS) into the matrix. Protons are taken up via the inlet half-channel and released through the outlet half-channel, following a Grotthuss mechanism. In Lycodon semicarinatus (Ryukyu odd-tooth snake), this protein is ATP synthase F(0) complex subunit a.